Consider the following 471-residue polypeptide: ATP synthase subunit beta (471 aa).

153 to 160 (GGAGVGKT) is a binding site for ATP.

Belongs to the ATPase alpha/beta chains family. F-type ATPases have 2 components, CF(1) - the catalytic core - and CF(0) - the membrane proton channel. CF(1) has five subunits: alpha(3), beta(3), gamma(1), delta(1), epsilon(1). CF(0) has four main subunits: a(1), b(1), b'(1) and c(9-12).

The protein localises to the cell membrane. It catalyses the reaction ATP + H2O + 4 H(+)(in) = ADP + phosphate + 5 H(+)(out). Its function is as follows. Produces ATP from ADP in the presence of a proton gradient across the membrane. The catalytic sites are hosted primarily by the beta subunits. This chain is ATP synthase subunit beta, found in Chloroflexus aurantiacus (strain ATCC 29364 / DSM 637 / Y-400-fl).